A 533-amino-acid chain; its full sequence is ATP synthase F(1) complex catalytic subunit beta, mitochondrial (533 aa).

The N-terminal 53 residues, Met1 to Ala53, are a transit peptide targeting the mitochondrion. Gly214, Val215, Gly216, Lys217, Thr218, and Val219 together coordinate ADP. Gly214 serves as a coordination point for ATP. The phosphate site is built by Gly214, Val215, Gly216, Lys217, and Thr218. ATP contacts are provided by Gly216, Lys217, Thr218, and Val219. Position 218 (Thr218) interacts with Mg(2+). Glu243 serves as a coordination point for Mg(2+). Arg244 is a binding site for ATP.

In terms of assembly, homotrimer. Component of the ATP synthase complex composed at least of ATP5F1A/subunit alpha, ATP5F1B/subunit beta, ATP5MC1/subunit c (homooctomer), MT-ATP6/subunit a, MT-ATP8/subunit 8, ATP5ME/subunit e, ATP5MF/subunit f, ATP5MG/subunit g, ATP5MK/subunit k, ATP5MJ/subunit j, ATP5F1C/subunit gamma, ATP5F1D/subunit delta, ATP5F1E/subunit epsilon, ATP5PF/subunit F6, ATP5PB/subunit b, ATP5PD/subunit d, ATP5PO/subunit OSCP. ATP synthase complex consists of a soluble F(1) head domain (subunits alpha(3) and beta(3)) - the catalytic core - and a membrane F(0) domain - the membrane proton channel (subunits c, a, 8, e, f, g, k and j). These two domains are linked by a central stalk (subunits gamma, delta, and epsilon) rotating inside the F1 region and a stationary peripheral stalk (subunits F6, b, d, and OSCP).

It is found in the mitochondrion inner membrane. It catalyses the reaction ATP + H2O + 4 H(+)(in) = ADP + phosphate + 5 H(+)(out). Functionally, catalytic subunit beta, of the mitochondrial membrane ATP synthase complex (F(1)F(0) ATP synthase or Complex V) that produces ATP from ADP in the presence of a proton gradient across the membrane which is generated by electron transport complexes of the respiratory chain. ATP synthase complex consist of a soluble F(1) head domain - the catalytic core - and a membrane F(1) domain - the membrane proton channel. These two domains are linked by a central stalk rotating inside the F(1) region and a stationary peripheral stalk. During catalysis, ATP synthesis in the catalytic domain of F(1) is coupled via a rotary mechanism of the central stalk subunits to proton translocation. In vivo, can only synthesize ATP although its ATP hydrolase activity can be activated artificially in vitro. With the subunit alpha (ATP5F1A), forms the catalytic core in the F(1) domain. In Gallus gallus (Chicken), this protein is ATP synthase F(1) complex catalytic subunit beta, mitochondrial.